The chain runs to 74 residues: Homeobox protein Hox-B8 (74 aa).

Residues 1-24 show a composition bias toward low complexity; that stretch reads YTDCKLAASGLGEEAESSEQSPSP. Positions 1-28 are disordered; it reads YTDCKLAASGLGEEAESSEQSPSPTQLF. The Antp-type hexapeptide signature appears at 27 to 32; sequence LFPWMR. Positions 39-74 form a DNA-binding region, homeobox; that stretch reads RRRGRQTYSRYQTLELEKEFLFNPYLTRKRRIEVSR.

Belongs to the Antp homeobox family.

It localises to the nucleus. Its function is as follows. Sequence-specific transcription factor which is part of a developmental regulatory system that provides cells with specific positional identities on the anterior-posterior axis. The protein is Homeobox protein Hox-B8 (HOXB8) of Gallus gallus (Chicken).